The following is a 565-amino-acid chain: Adenine deaminase (565 aa).

The protein belongs to the metallo-dependent hydrolases superfamily. Adenine deaminase family. Requires Mn(2+) as cofactor.

The enzyme catalyses adenine + H2O + H(+) = hypoxanthine + NH4(+). This Cereibacter sphaeroides (strain ATCC 17023 / DSM 158 / JCM 6121 / CCUG 31486 / LMG 2827 / NBRC 12203 / NCIMB 8253 / ATH 2.4.1.) (Rhodobacter sphaeroides) protein is Adenine deaminase.